The primary structure comprises 216 residues: Histidine biosynthesis bifunctional protein HisIE (216 aa).

The interval 1–127 (MSFIDSLSPQ…GKIVAPPGDT (127 aa)) is phosphoribosyl-AMP cyclohydrolase. Positions 128–216 (LSQVFQVICD…VYRKLQERRR (89 aa)) are phosphoribosyl-ATP pyrophosphohydrolase.

In the N-terminal section; belongs to the PRA-CH family. This sequence in the C-terminal section; belongs to the PRA-PH family.

It localises to the cytoplasm. The enzyme catalyses 1-(5-phospho-beta-D-ribosyl)-ATP + H2O = 1-(5-phospho-beta-D-ribosyl)-5'-AMP + diphosphate + H(+). The catalysed reaction is 1-(5-phospho-beta-D-ribosyl)-5'-AMP + H2O = 1-(5-phospho-beta-D-ribosyl)-5-[(5-phospho-beta-D-ribosylamino)methylideneamino]imidazole-4-carboxamide. It functions in the pathway amino-acid biosynthesis; L-histidine biosynthesis; L-histidine from 5-phospho-alpha-D-ribose 1-diphosphate: step 2/9. The protein operates within amino-acid biosynthesis; L-histidine biosynthesis; L-histidine from 5-phospho-alpha-D-ribose 1-diphosphate: step 3/9. The protein is Histidine biosynthesis bifunctional protein HisIE (hisI) of Nostoc sp. (strain PCC 7120 / SAG 25.82 / UTEX 2576).